A 100-amino-acid polypeptide reads, in one-letter code: Small ribosomal subunit protein uS14c (100 aa).

The protein belongs to the universal ribosomal protein uS14 family. Part of the 30S ribosomal subunit.

Its subcellular location is the plastid. It localises to the cyanelle. Functionally, binds 16S rRNA, required for the assembly of 30S particles. In Cyanophora paradoxa, this protein is Small ribosomal subunit protein uS14c.